Reading from the N-terminus, the 91-residue chain is Small ribosomal subunit protein uS17 (91 aa).

Belongs to the universal ribosomal protein uS17 family. Part of the 30S ribosomal subunit.

Its function is as follows. One of the primary rRNA binding proteins, it binds specifically to the 5'-end of 16S ribosomal RNA. This chain is Small ribosomal subunit protein uS17, found in Acidithiobacillus ferrooxidans (strain ATCC 23270 / DSM 14882 / CIP 104768 / NCIMB 8455) (Ferrobacillus ferrooxidans (strain ATCC 23270)).